The sequence spans 339 residues: 2-deoxy-scyllo-inosamine dehydrogenase (339 aa).

Zn(2+)-binding residues include cysteine 37, histidine 59, cysteine 88, cysteine 91, cysteine 94, cysteine 102, and glutamate 143.

It belongs to the zinc-containing alcohol dehydrogenase family. DOIA dehydrogenase subfamily. The cofactor is Zn(2+).

It catalyses the reaction 2-deoxy-scyllo-inosamine + NADP(+) = 3-amino-2,3-dideoxy-scyllo-inosose + NADPH + H(+). The catalysed reaction is 2-deoxy-scyllo-inosamine + NAD(+) = 3-amino-2,3-dideoxy-scyllo-inosose + NADH + H(+). It functions in the pathway metabolic intermediate biosynthesis; 2-deoxystreptamine biosynthesis; 2-deoxystreptamine from D-glucose 6-phosphate: step 3/4. Its pathway is antibiotic biosynthesis; tobramycin biosynthesis. In terms of biological role, catalyzes the oxidation of 2-deoxy-scyllo-inosamine (DOIA) with NAD(+) or NADP(+), forming 3-amino-2,3-dideoxy-scyllo-inosose (amino-DOI). This chain is 2-deoxy-scyllo-inosamine dehydrogenase (tobE), found in Streptoalloteichus tenebrarius (strain ATCC 17920 / DSM 40477 / JCM 4838 / CBS 697.72 / NBRC 16177 / NCIMB 11028 / NRRL B-12390 / A12253. 1 / ISP 5477) (Streptomyces tenebrarius).